The primary structure comprises 320 residues: ATP-dependent 6-phosphofructokinase (320 aa).

Glycine 12 serves as a coordination point for ATP. ADP contacts are provided by residues 22 to 26 and 55 to 60; these read RGVVR and RYSVSD. Residues 73–74 and 103–106 contribute to the ATP site; these read RF and GDGS. Aspartate 104 contributes to the Mg(2+) binding site. Position 126–128 (126–128) interacts with substrate; that stretch reads TID. Aspartate 128 (proton acceptor) is an active-site residue. Arginine 155 serves as a coordination point for ADP. Residues arginine 163 and 170–172 each bind substrate; that span reads MGR. ADP contacts are provided by residues 186-188, lysine 212, and 214-216; these read GCE and KKH. Substrate contacts are provided by residues glutamate 223, arginine 244, and 250–253; that span reads HIQR.

This sequence belongs to the phosphofructokinase type A (PFKA) family. ATP-dependent PFK group I subfamily. Prokaryotic clade 'B1' sub-subfamily. As to quaternary structure, homotetramer. It depends on Mg(2+) as a cofactor.

It localises to the cytoplasm. It catalyses the reaction beta-D-fructose 6-phosphate + ATP = beta-D-fructose 1,6-bisphosphate + ADP + H(+). It functions in the pathway carbohydrate degradation; glycolysis; D-glyceraldehyde 3-phosphate and glycerone phosphate from D-glucose: step 3/4. Its activity is regulated as follows. Allosterically activated by ADP and other diphosphonucleosides, and allosterically inhibited by phosphoenolpyruvate. Its function is as follows. Catalyzes the phosphorylation of D-fructose 6-phosphate to fructose 1,6-bisphosphate by ATP, the first committing step of glycolysis. The chain is ATP-dependent 6-phosphofructokinase from Sodalis glossinidius (strain morsitans).